The following is a 106-amino-acid chain: Iron-sulfur cluster assembly protein CyaY (106 aa).

The protein belongs to the frataxin family.

In terms of biological role, involved in iron-sulfur (Fe-S) cluster assembly. May act as a regulator of Fe-S biogenesis. The chain is Iron-sulfur cluster assembly protein CyaY from Yersinia enterocolitica serotype O:8 / biotype 1B (strain NCTC 13174 / 8081).